Reading from the N-terminus, the 1205-residue chain is MADSLDEFIEEQKAKLAKDKAELESDPPYMEMKGKASEKLSENSKILISMAKENIPPSSQQQPKGPLGIEYGLSLPLGEDYEQKKHKLKEELRQDYRRYLTQGITQAKRKKNFLSTGETDPSTLGVSLPIDERLSAKERLKLERNREYNQFLRGKAESTEKVRQVEKNIEPKSQRNKNPISQGKSDLPLQIQTAYTHSEGPWLSRQEEGLYRQLDGEIELRSRRPLKQTKEEVGISGAEHPSLSGSAGVPERRARRANGERVLDRQHCRADRDPGVSEDMDERFRFESDFDRRLLRVYTNGRPHGSRRGYVDGDDVPEEPNTQISAAENKSVHCNGPPRSADLDITSPFAGMLFGGEDRELTKRRKEKYRQELLEQIAEQQKKKRREKDLAFGITTSGVQDPEKSPDRLKQFSLTPRHFEEMPPERPRVAFQTPPPPFSAPSSPSVPPVHSAPSHNEDLHSGLGSTLGELAHPRVLPVPLNPPPPPLLAPPASNYRTPYDDAYYFYGARNTLDPNIVYYGSGMIGGQPAPHVSAPVTHQVAPPAVNTVGQNEQKVLSDGLRNSGLVFEDKPKPSTQSLQSYQEALQEQIREREARRKKERLEKEEYEAKLEAEMRIYNPWGKGGGGAPLRDAKGNLITDLNRMHRQNIDAYHNPDARTYEDKRAVVSIDQNLATSNAENLEDSANKNSGPLQTQSSPFARGNTFGEPLSELQIKQQELYKNFLRFQIEEKRQREEAEREKLRVAEEKEEKRLAEQRARIQQEYEEEQERRREKEEEQRLKNEELIRLAEERRKEAERKKKEEEEKHNLQLQHYYERENIIGDETKHLRQPSPVVPALQNKIASKLQRPPSVDTIISSFIHESSMSRAQSPPVPARKNQLRAEEEKKNVIMELSEMRKQLRSEERRLQGRLLHLDSDDEIPMRKRERNPMDIFDMARHRVQAPVRRPSPKGLDATTFQNIHDFNELRERDSDTRVDLRLMYPDPPRDHHTLEIQQQALLREQQKRLNRIKMRRDAGADLDTICTDNAQGRRMPRDDTNDFLKNSLLESDSAFIGAYGETYPVIEDNAFPPPSQLPSARERRRNKLKGLDFDSSRLHTPQDGLSLKSISSVNVDQVRMRNEDRMRRLTEQQKKPTNTDDEGSLVDPDDIMRHLSDDGRNSAATEPWLRPGTSESLKRFMAEHLNEEQHKGPGKPGTFTWQGLSAAHA.

Coiled coils occupy residues 12–34 (QKAKLAKDKAELESDPPYMEMKG) and 87–108 (KLKEELRQDYRRYLTQGITQAK). The segment at 16 to 37 (LAKDKAELESDPPYMEMKGKAS) is disordered. Residues 158-173 (STEKVRQVEKNIEPKS) show a composition bias toward basic and acidic residues. Disordered stretches follow at residues 158–187 (STEKVRQVEKNIEPKSQRNKNPISQGKSDL), 222–277 (SRRP…PGVS), and 380–467 (QQKK…GSTL). Residues 176–187 (NKNPISQGKSDL) are compositionally biased toward polar residues. Composition is skewed to basic and acidic residues over residues 222–233 (SRRPLKQTKEEV) and 257–275 (ANGERVLDRQHCRADRDPG). A coiled-coil region spans residues 357–391 (EDRELTKRRKEKYRQELLEQIAEQQKKKRREKDLA). Basic and acidic residues-rich tracts occupy residues 401–410 (DPEKSPDRLK) and 417–428 (RHFEEMPPERPR). Phosphoserine is present on serine 405. Positions 433 to 447 (TPPPPFSAPSSPSVP) are enriched in pro residues. Positions 574–618 (STQSLQSYQEALQEQIREREARRKKERLEKEEYEAKLEAEMRIYN) form a coiled coil. Residues 677 to 704 (AENLEDSANKNSGPLQTQSSPFARGNTF) are disordered. Polar residues predominate over residues 685–697 (NKNSGPLQTQSSP). Residues 724–813 (RFQIEEKRQR…EKHNLQLQHY (90 aa)) adopt a coiled-coil conformation. Phosphoserine is present on residues serine 850 and serine 869. Residues 862 to 881 (SSMSRAQSPPVPARKNQLRA) form a disordered region. Residues 874–911 (ARKNQLRAEEEKKNVIMELSEMRKQLRSEERRLQGRLL) adopt a coiled-coil conformation. The residue at position 915 (serine 915) is a Phosphoserine. Residues 993 to 1014 (QQQALLREQQKRLNRIKMRRDA) are a coiled coil. Disordered regions lie at residues 1086–1105 (GLDFDSSRLHTPQDGLSLKS), 1124–1169 (RLTE…RPGT), and 1182–1205 (NEEQHKGPGKPGTFTWQGLSAAHA). Over residues 1124-1134 (RLTEQQKKPTN) the composition is skewed to basic and acidic residues. The segment covering 1135-1145 (TDDEGSLVDPD) has biased composition (acidic residues). The span at 1146–1156 (DIMRHLSDDGR) shows a compositional bias: basic and acidic residues.

In terms of assembly, interacts with PLEKHG6. Interacts with ARMC9, TOGARAM1, CCDC66, CEP104 and CEP290. Post-translationally, phosphorylated. Phosphorylation increases in colcemide-treated cells.

It localises to the cytoplasm. Its subcellular location is the cytoskeleton. The protein resides in the microtubule organizing center. The protein localises to the centrosome. It is found in the spindle. It localises to the spindle pole. Its subcellular location is the cell projection. The protein resides in the cilium. In terms of biological role, may play a role in cell-cycle-dependent microtubule organization. This is Centrosome and spindle pole associated protein 1 (Cspp1) from Mus musculus (Mouse).